The sequence spans 359 residues: Phospho-N-acetylmuramoyl-pentapeptide-transferase (359 aa).

Transmembrane regions (helical) follow at residues 3–23, 55–75, 80–100, 117–137, 156–176, 187–207, 231–251, 255–275, 280–300, and 334–354; these read QILI…PALI, VAII…GLAF, ISAS…VGFL, TAKT…ALGF, IATV…VVSA, LDGL…LITF, LAIV…WNAA, IFMG…ISVT, ILAV…VLQI, and FWLL…GEWL.

This sequence belongs to the glycosyltransferase 4 family. MraY subfamily. Requires Mg(2+) as cofactor.

Its subcellular location is the cell membrane. It catalyses the reaction UDP-N-acetyl-alpha-D-muramoyl-L-alanyl-gamma-D-glutamyl-meso-2,6-diaminopimeloyl-D-alanyl-D-alanine + di-trans,octa-cis-undecaprenyl phosphate = di-trans,octa-cis-undecaprenyl diphospho-N-acetyl-alpha-D-muramoyl-L-alanyl-D-glutamyl-meso-2,6-diaminopimeloyl-D-alanyl-D-alanine + UMP. It participates in cell wall biogenesis; peptidoglycan biosynthesis. Catalyzes the initial step of the lipid cycle reactions in the biosynthesis of the cell wall peptidoglycan: transfers peptidoglycan precursor phospho-MurNAc-pentapeptide from UDP-MurNAc-pentapeptide onto the lipid carrier undecaprenyl phosphate, yielding undecaprenyl-pyrophosphoryl-MurNAc-pentapeptide, known as lipid I. The chain is Phospho-N-acetylmuramoyl-pentapeptide-transferase from Mycolicibacterium paratuberculosis (strain ATCC BAA-968 / K-10) (Mycobacterium paratuberculosis).